The sequence spans 850 residues: Lon protease (850 aa).

The Lon N-terminal domain maps to 38-232 (LPVLPLRDVV…LLVGLVDGEI (195 aa)). 384-391 (GPPGVGKT) serves as a coordination point for ATP. A Lon proteolytic domain is found at 634-815 (ENEIGLVTGL…DEVLDLALER (182 aa)). Residues Ser721 and Lys764 contribute to the active site. A disordered region spans residues 819 to 850 (PKKAGKEKARKTAPRVAVRGKSRSTPGTRVKH). Residues 821–840 (KAGKEKARKTAPRVAVRGKS) show a composition bias toward basic residues. Positions 841-850 (RSTPGTRVKH) are enriched in polar residues.

This sequence belongs to the peptidase S16 family. Homohexamer. Organized in a ring with a central cavity.

The protein resides in the cytoplasm. It carries out the reaction Hydrolysis of proteins in presence of ATP.. ATP-dependent serine protease that mediates the selective degradation of mutant and abnormal proteins as well as certain short-lived regulatory proteins. Required for cellular homeostasis and for survival from DNA damage and developmental changes induced by stress. Degrades polypeptides processively to yield small peptide fragments that are 5 to 10 amino acids long. Binds to DNA in a double-stranded, site-specific manner. The protein is Lon protease of Xanthomonas oryzae pv. oryzae (strain KACC10331 / KXO85).